An 864-amino-acid chain; its full sequence is Leucine--tRNA ligase (864 aa).

Positions 42–52 match the 'HIGH' region motif; sequence PYPSGKLHMGH. The short motif at 624–628 is the 'KMSKS' region element; the sequence is KMSKS. Lys627 is a binding site for ATP.

Belongs to the class-I aminoacyl-tRNA synthetase family.

It localises to the cytoplasm. The catalysed reaction is tRNA(Leu) + L-leucine + ATP = L-leucyl-tRNA(Leu) + AMP + diphosphate. This Paraburkholderia phymatum (strain DSM 17167 / CIP 108236 / LMG 21445 / STM815) (Burkholderia phymatum) protein is Leucine--tRNA ligase.